Consider the following 261-residue polypeptide: Probable glutathione-independent glyoxalase hsp3103 (261 aa).

Residues Cys162, His163, and Glu196 contribute to the active site.

This sequence belongs to the peptidase C56 family. HSP31-like subfamily.

The catalysed reaction is methylglyoxal + H2O = (R)-lactate + H(+). Catalyzes the conversion of methylglyoxal (MG) to D-lactate in a single glutathione (GSH)-independent step. May play a role in detoxifying endogenously produced glyoxals. Involved in protection against reactive oxygen species (ROS). The sequence is that of Probable glutathione-independent glyoxalase hsp3103 from Schizosaccharomyces pombe (strain 972 / ATCC 24843) (Fission yeast).